The following is a 61-amino-acid chain: UPF0434 protein PFL_1779 (61 aa).

The protein belongs to the UPF0434 family.

The protein is UPF0434 protein PFL_1779 of Pseudomonas fluorescens (strain ATCC BAA-477 / NRRL B-23932 / Pf-5).